The following is a 232-amino-acid chain: Triosephosphate isomerase (232 aa).

Position 6 to 8 (asparagine 6 to lysine 8) interacts with substrate. Histidine 86 acts as the Electrophile in catalysis. Glutamate 155 serves as the catalytic Proton acceptor. Residues glycine 161 and serine 191 each contribute to the substrate site.

It belongs to the triosephosphate isomerase family. Homodimer.

The protein resides in the cytoplasm. The enzyme catalyses D-glyceraldehyde 3-phosphate = dihydroxyacetone phosphate. Its pathway is carbohydrate biosynthesis; gluconeogenesis. The protein operates within carbohydrate degradation; glycolysis; D-glyceraldehyde 3-phosphate from glycerone phosphate: step 1/1. In terms of biological role, involved in the gluconeogenesis. Catalyzes stereospecifically the conversion of dihydroxyacetone phosphate (DHAP) to D-glyceraldehyde-3-phosphate (G3P). This Nitratiruptor sp. (strain SB155-2) protein is Triosephosphate isomerase.